A 502-amino-acid polypeptide reads, in one-letter code: Glycerate kinase (502 aa).

The protein belongs to the glycerate kinase type-2 family.

It localises to the cytoplasm. The enzyme catalyses (R)-glycerate + ATP = (2R)-3-phosphoglycerate + ADP + H(+). The sequence is that of Glycerate kinase (glyctk) from Danio rerio (Zebrafish).